A 1072-amino-acid polypeptide reads, in one-letter code: Vacuolar membrane protease (1072 aa).

Topologically, residues 1–9 are cytoplasmic; sequence MINPISFRP. A helical membrane pass occupies residues 10 to 30; it reads GPVTFWTTLIYLALLIPIVII. At 31–404 the chain is on the vacuolar side; the sequence is NEKTPAAPKT…SFVLFGLRGM (374 aa). Residues asparagine 48, asparagine 116, asparagine 119, and asparagine 128 are each glycosylated (N-linked (GlcNAc...) asparagine). Zn(2+)-binding residues include histidine 185 and aspartate 197. The active-site Proton acceptor is glutamate 231. Positions 232, 257, and 330 each coordinate Zn(2+). A helical transmembrane segment spans residues 405-425; sequence FAWSLTLLIATPLVLVGITWL. The Cytoplasmic segment spans residues 426–457; sequence LRNLDKDYFFTSTVKTKEHPEYEAVPIGGWKG. A helical membrane pass occupies residues 458–478; sequence FFRFPFALGVAVFFTISSALL. Residues 479–492 are Vacuolar-facing; that stretch reads MNKVNPLIVYSSRY. A helical transmembrane segment spans residues 493–513; sequence SVWVMMVSIFYFSFWMIMRGA. The Cytoplasmic segment spans residues 514 to 523; that stretch reads NFVRPSALHR. The helical transmembrane segment at 524–544 threads the bilayer; it reads GYANLWLFVFGWIVLVAVTAL. Residues 545 to 554 are Vacuolar-facing; that stretch reads EDRRRIAAGY. A helical transmembrane segment spans residues 555–575; sequence IFVFLESAIFLSCLISFVELL. At 576-747 the chain is on the cytoplasmic side; sequence AVPRKSSYAL…YDHEQEWSGH (172 aa). A disordered region spans residues 593 to 713; that stretch reads GQEHDHNGYQ…GTNDRGRTTF (121 aa). Basic and acidic residues predominate over residues 606 to 617; it reads DSTDEPSLRARA. A compositionally biased stretch (polar residues) spans 643 to 661; sequence GTTNGLSTAPSVAAHSSQP. The helical transmembrane segment at 748–768 threads the bilayer; that stretch reads LPSWAWFFQFLLLGPFMIILA. Residues 769 to 789 lie on the Vacuolar side of the membrane; sequence AQTGLMLTDAVYQTGSDGSKL. The chain crosses the membrane as a helical span at residues 790–810; that stretch reads ITPYLIIFVFTVLLILPLTPF. At 811–817 the chain is on the cytoplasmic side; that stretch reads IHRVTHH. Residues 818 to 838 traverse the membrane as a helical segment; it reads IPVFLLVVFIVTLTYNLIAFP. The Vacuolar portion of the chain corresponds to 839–1072; the sequence is FSANNRYKTF…VEGRKAFKIV (234 aa). N-linked (GlcNAc...) asparagine glycosylation is found at asparagine 932 and asparagine 974.

The protein belongs to the peptidase M28 family. Zn(2+) serves as cofactor.

It is found in the vacuole membrane. May be involved in vacuolar sorting and osmoregulation. The sequence is that of Vacuolar membrane protease from Neurospora crassa (strain ATCC 24698 / 74-OR23-1A / CBS 708.71 / DSM 1257 / FGSC 987).